A 199-amino-acid polypeptide reads, in one-letter code: Recombination protein RecR (199 aa).

The segment at 58–73 adopts a C4-type zinc-finger fold; the sequence is CSVCYGLADSDPCHIC. One can recognise a Toprim domain in the interval 81–176; the sequence is DVVCVVEQGT…KITRIASGVP (96 aa).

It belongs to the RecR family.

Functionally, may play a role in DNA repair. It seems to be involved in an RecBC-independent recombinational process of DNA repair. It may act with RecF and RecO. In Desulfatibacillum aliphaticivorans, this protein is Recombination protein RecR.